We begin with the raw amino-acid sequence, 389 residues long: Growth/differentiation factor 2 (389 aa).

A signal peptide spans 1–20 (MWRVGHLLLLMSIVFRITEE). The propeptide occupies 21-280 (KSLGDAGSLE…PVSNRHRRRK (260 aa)). 4 N-linked (GlcNAc...) asparagine glycosylation sites follow: N65, N118, N127, and N232. Residues 263–272 (QQQVGNQAPV) are compositionally biased toward polar residues. The tract at residues 263-284 (QQQVGNQAPVSNRHRRRKRKAK) is disordered. Positions 274 to 284 (NRHRRRKRKAK) are enriched in basic residues. Disulfide bonds link C288–C354, C317–C386, and C321–C388. N342 carries N-linked (GlcNAc...) asparagine glycosylation.

This sequence belongs to the TGF-beta family. Homodimer; disulfide-linked. In terms of processing, a reversible disulfide bond can be formed between the two subunits in the homodimer; this has no effect on gdf2 activity.

The protein resides in the secreted. Potent circulating inhibitor of angiogenesis. Signals through the type I activin receptor ACVRL1 but not other Alks. Signaling through SMAD1 in endothelial cells requires TGF-beta coreceptor endoglin/eng. This Danio rerio (Zebrafish) protein is Growth/differentiation factor 2 (gdf2).